Here is a 458-residue protein sequence, read N- to C-terminus: MKKQNPWISLSEEEKNQIFNFSESYKKFISKFKTEREVTSYALDKAKKRGFIDAEEKKNLIPGDKIFYTCREKSVAFAIIGKNPIENGMNLIVSHTDSPRLDAKPSPISEENELAFLKTNYYGGIKKYQWLSTPLSIRGVVFLKNGEKVEINIGDNENDPVFVIPDILPHLDKKIQRNKKSDEIIEGENLKILIGSLPIESKEQDKVKLGTLQLIKEKYKIEEEDFVSSEIEIVPAGTAKDVGFDKALIGAYGQDDKICAYASLEAIFDLEEIPSKTAICFLVDKEEIGSTGSTGLDSRYLEYFVSDMIFKIKKSEYNNLQVQKALWNSKSISADVCAAINPIFNSVHDAQNAPKLGYGIPIMKYTGHGGKVMASDADAELVSYIRQLLNKNNIAWQVATLGKVEEGGGGTVAKFLASYGIRTIDMGPAVISMHSPMEITSKFDLYNAYLAYKAFYKE.

Zn(2+) is bound by residues His95, His170, and His434.

Belongs to the peptidase M18 family. Requires Zn(2+) as cofactor.

The chain is Probable M18 family aminopeptidase 1 from Borrelia garinii subsp. bavariensis (strain ATCC BAA-2496 / DSM 23469 / PBi) (Borreliella bavariensis).